Reading from the N-terminus, the 437-residue chain is ATP-dependent RNA helicase RhlB (437 aa).

Positions 9 to 37 (QKFADLGLEPTVLEGLDAQGFHYCTPIQA) match the Q motif motif. One can recognise a Helicase ATP-binding domain in the interval 40-219 (LPVVLTGQDI…FEHMNSPESV (180 aa)). ATP is bound at residue 53 to 60 (AQTGTGKT). Residues 165-168 (DEAD) carry the DEAD box motif. The region spanning 245–390 (RLLQTLIEEE…LSKYNSEALL (146 aa)) is the Helicase C-terminal domain. Residues 395-437 (APLRLQRTPRQGGNRRPNGNRQGQGQSRPRNNNRRHPQSQKQQ) are disordered. Positions 400-424 (QRTPRQGGNRRPNGNRQGQGQSRPR) are enriched in low complexity. Residues 425-437 (NNNRRHPQSQKQQ) are compositionally biased toward basic residues.

Belongs to the DEAD box helicase family. RhlB subfamily. As to quaternary structure, component of the RNA degradosome, which is a multiprotein complex involved in RNA processing and mRNA degradation.

Its subcellular location is the cytoplasm. The catalysed reaction is ATP + H2O = ADP + phosphate + H(+). Functionally, DEAD-box RNA helicase involved in RNA degradation. Has RNA-dependent ATPase activity and unwinds double-stranded RNA. In Photobacterium profundum (strain SS9), this protein is ATP-dependent RNA helicase RhlB.